The chain runs to 1393 residues: DNA glycosylase/AP lyase ROS1 (1393 aa).

3 disordered regions span residues 1–25, 98–186, and 237–265; these read MEKQ…MKPF, SLSS…TSTR, and LSAP…SNLE. Over residues 98-108 the composition is skewed to low complexity; the sequence is SLSSVSNNVAE. Over residues 117 to 126 the composition is skewed to basic residues; it reads PKRKKHRPKV. Basic and acidic residues-rich tracts occupy residues 127 to 138 and 162 to 171; these read RREAKPKREPKP and KKVEVSKDQD. Positions 243-256 are enriched in basic residues; sequence PKRKRSQGKRKGVQ. The DEMETER stretch occupies residues 528 to 626; the sequence is KVDLDDETDR…AFMSLASQFP (99 aa). Positions 653–672 are enriched in polar residues; it reads EETMSSPPDHNHSSVTLKNT. Disordered stretches follow at residues 653 to 722 and 789 to 830; these read EETM…SVEV and SNQV…CSQQ. Residues 687–698 are compositionally biased toward low complexity; sequence SRSSSEIAISAH. The span at 699-722 shows a compositional bias: basic and acidic residues; it reads ESVDKTTDSKEYVDSDRKGSSVEV. Residues 816–830 are compositionally biased toward polar residues; that stretch reads KSSVDSSEPGCCSQQ. Lys-901 is covalently cross-linked (Glycyl lysine isopeptide (Lys-Gly) (interchain with G-Cter in ubiquitin)). Positions 1038, 1045, 1048, and 1054 each coordinate [4Fe-4S] cluster.

This sequence belongs to the DNA glycosylase family. DEMETER subfamily. In terms of assembly, interacts (via the central region) with ZDP. Binds to RPA2A. Interacts with XRCC1. Interacts probably with a complex made of MBD7, IDM1, IDM2 and IDM3. Interacts with APE1L. Requires [4Fe-4S] cluster as cofactor. As to expression, expressed ubiquitously in both vegetative and reproductive organs.

The protein localises to the nucleus. Its subcellular location is the nucleolus. It catalyses the reaction 2'-deoxyribonucleotide-(2'-deoxyribose 5'-phosphate)-2'-deoxyribonucleotide-DNA = a 3'-end 2'-deoxyribonucleotide-(2,3-dehydro-2,3-deoxyribose 5'-phosphate)-DNA + a 5'-end 5'-phospho-2'-deoxyribonucleoside-DNA + H(+). With respect to regulation, stimulated by ZDP. Stimulated by XRCC1. Its function is as follows. Bifunctional DNA glycosylase/lyase, which excises 5-methylcytosine (5-meC) and 5-hydroxymethylcytosine (5-hmeC), leaving an apyrimidinic (AP) site that is subsequently incised by the lyase activity. Generates 3'-phosphor-alpha,beta-unsaturated aldehyde (3'-PUA) as a primary 5-meC excision intermediate. Prevents DNA hypermethylation, specifically in the promoter of otherwise silenced loci. May be involved in DNA repair through its nicking activity on methylated DNA. Binds with similar affinity to both methylated and non-methylated DNA. Highly distributive behavior on DNA substrates containing multiple 5-meC residues. Involved with Pol IV in the remodeling of the 5S rDNA chromatin via DNA methylation modifications during the first days of development post-germination. Participates in UV-B induced- and oxidative DNA damage repair. The sequence is that of DNA glycosylase/AP lyase ROS1 from Arabidopsis thaliana (Mouse-ear cress).